Here is a 319-residue protein sequence, read N- to C-terminus: Porphobilinogen deaminase 1 (319 aa).

The residue at position 244 (Cys244) is an S-(dipyrrolylmethanemethyl)cysteine.

The protein belongs to the HMBS family. In terms of assembly, monomer. Requires dipyrromethane as cofactor.

It carries out the reaction 4 porphobilinogen + H2O = hydroxymethylbilane + 4 NH4(+). The protein operates within porphyrin-containing compound metabolism; protoporphyrin-IX biosynthesis; coproporphyrinogen-III from 5-aminolevulinate: step 2/4. Its function is as follows. Tetrapolymerization of the monopyrrole PBG into the hydroxymethylbilane pre-uroporphyrinogen in several discrete steps. In Streptomyces coelicolor (strain ATCC BAA-471 / A3(2) / M145), this protein is Porphobilinogen deaminase 1 (hemC1).